The sequence spans 452 residues: Pup--protein ligase (452 aa).

Residue glutamate 9 coordinates Mg(2+). Arginine 53 serves as a coordination point for ATP. Mg(2+) is bound at residue tyrosine 55. The active-site Proton acceptor is the aspartate 57. Position 63 (glutamate 63) interacts with Mg(2+). Residues threonine 66 and tryptophan 419 each contribute to the ATP site.

It belongs to the Pup ligase/Pup deamidase family. Pup-conjugating enzyme subfamily.

It carries out the reaction ATP + [prokaryotic ubiquitin-like protein]-L-glutamate + [protein]-L-lysine = ADP + phosphate + N(6)-([prokaryotic ubiquitin-like protein]-gamma-L-glutamyl)-[protein]-L-lysine.. Its pathway is protein degradation; proteasomal Pup-dependent pathway. It functions in the pathway protein modification; protein pupylation. In terms of biological role, catalyzes the covalent attachment of the prokaryotic ubiquitin-like protein modifier Pup to the proteasomal substrate proteins, thereby targeting them for proteasomal degradation. This tagging system is termed pupylation. The ligation reaction involves the side-chain carboxylate of the C-terminal glutamate of Pup and the side-chain amino group of a substrate lysine. This chain is Pup--protein ligase, found in Mycobacterium tuberculosis (strain KZN 1435 / MDR).